Here is a 611-residue protein sequence, read N- to C-terminus: Large ribosomal subunit assembly factor BipA (611 aa).

The 196-residue stretch at 7–202 folds into the tr-type G domain; it reads KNLRNIAIIA…AIVKYTPPPT (196 aa). GTP-binding positions include 19–24 and 132–135; these read DHGKTT and NKID.

It belongs to the TRAFAC class translation factor GTPase superfamily. Classic translation factor GTPase family. BipA subfamily. Monomer.

It is found in the cytoplasm. It carries out the reaction GTP + H2O = GDP + phosphate + H(+). In terms of biological role, a 50S ribosomal subunit assembly protein with GTPase activity, required for 50S subunit assembly at low temperatures, may also play a role in translation. Binds GTP and analogs. Binds the 70S ribosome between the 30S and 50S subunits, in a similar position as ribosome-bound EF-G; it contacts a number of ribosomal proteins, both rRNAs and the A-site tRNA. The sequence is that of Large ribosomal subunit assembly factor BipA from Buchnera aphidicola subsp. Baizongia pistaciae (strain Bp).